Consider the following 473-residue polypeptide: Photosystem II CP43 reaction center protein (473 aa).

The propeptide occupies 1–14 (MKILYSLRRFYHVE). The residue at position 15 (threonine 15) is an N-acetylthreonine. The residue at position 15 (threonine 15) is a Phosphothreonine. The next 5 membrane-spanning stretches (helical) occupy residues 69-93 (LFEV…PHLA), 134-155 (LLGP…KDRN), 178-200 (KALY…RKIT), 255-275 (KPFA…LSYS), and 291-312 (WFNN…ASQA). Glutamate 367 provides a ligand contact to [CaMn4O5] cluster. A helical transmembrane segment spans residues 447 to 471 (RARAAAAGFEKGIDRDLEPVLYMTP).

The protein belongs to the PsbB/PsbC family. PsbC subfamily. PSII is composed of 1 copy each of membrane proteins PsbA, PsbB, PsbC, PsbD, PsbE, PsbF, PsbH, PsbI, PsbJ, PsbK, PsbL, PsbM, PsbT, PsbX, PsbY, PsbZ, Psb30/Ycf12, at least 3 peripheral proteins of the oxygen-evolving complex and a large number of cofactors. It forms dimeric complexes. Binds multiple chlorophylls and provides some of the ligands for the Ca-4Mn-5O cluster of the oxygen-evolving complex. It may also provide a ligand for a Cl- that is required for oxygen evolution. PSII binds additional chlorophylls, carotenoids and specific lipids. serves as cofactor.

It localises to the plastid. Its subcellular location is the chloroplast thylakoid membrane. One of the components of the core complex of photosystem II (PSII). It binds chlorophyll and helps catalyze the primary light-induced photochemical processes of PSII. PSII is a light-driven water:plastoquinone oxidoreductase, using light energy to abstract electrons from H(2)O, generating O(2) and a proton gradient subsequently used for ATP formation. The polypeptide is Photosystem II CP43 reaction center protein (Sorghum bicolor (Sorghum)).